A 564-amino-acid polypeptide reads, in one-letter code: Serine/threonine-protein kinase PknA (564 aa).

The region spanning 9–271 (YRVIKTLGSG…TAREMLEALQ (263 aa)) is the Protein kinase domain. Residues 15 to 23 (LGSGGFGET) and K40 contribute to the ATP site. Residue D139 is the Proton acceptor of the active site. Polar residues predominate over residues 360 to 406 (QPVTQTTSLPSETTISNNDTPTVEPSPTDTPETPISQTVTQDPTPQA). A disordered region spans residues 360-458 (QPVTQTTSLP…PVEATDRPSP (99 aa)). Low complexity predominate over residues 428 to 445 (TTEPTTSVPQPTTPSEPQ).

Belongs to the protein kinase superfamily. Ser/Thr protein kinase family.

The catalysed reaction is L-seryl-[protein] + ATP = O-phospho-L-seryl-[protein] + ADP + H(+). The enzyme catalyses L-threonyl-[protein] + ATP = O-phospho-L-threonyl-[protein] + ADP + H(+). In terms of biological role, probably required for both normal cellular growth and differentiation. Inactivation of pknA leads to colonies that appear light green and rough in the absence of combined nitrogen. The chain is Serine/threonine-protein kinase PknA (pknA) from Nostoc sp. (strain PCC 7120 / SAG 25.82 / UTEX 2576).